We begin with the raw amino-acid sequence, 320 residues long: Putative thiosulfate sulfurtransferase 2 (320 aa).

Rhodanese domains follow at residues 18-125 (HAPK…PLSS) and 154-267 (AINV…HACP). The active-site Cysteine persulfide intermediate is the C233. Position 238 (R238) interacts with substrate.

The catalysed reaction is thiosulfate + hydrogen cyanide = thiocyanate + sulfite + 2 H(+). May be a sulfotransferase involved in the formation of thiosulfate. In Mycobacterium bovis (strain ATCC BAA-935 / AF2122/97), this protein is Putative thiosulfate sulfurtransferase 2 (cysA2).